We begin with the raw amino-acid sequence, 388 residues long: Type II secretion system protein F (388 aa).

Positions 1–28 (MTEGDSARQVRQQLREQGLTPLEVNETT) are disordered. Topologically, residues 1 to 153 (MTEGDSARQV…HMRTKLLQAM (153 aa)) are cytoplasmic. Glu-79, Asn-133, and Asp-137 together coordinate Ca(2+). Residues 154-174 (IYPIVLTLVAVGVISILLTAV) traverse the membrane as a helical segment. Residues 175–205 (VPKVVAQFEHMGQQLPATTRFLIGTSELMQH) are Periplasmic-facing. A helical transmembrane segment spans residues 206-226 (YGLWFLLLLFIGGFVWRWWLT). The Cytoplasmic segment spans residues 227-350 (DEKRRRHWHQ…QDREFETQVN (124 aa)). Residues 351–371 (IALGVFEPLLVVSMAGVVLFI) form a helical membrane-spanning segment. Topologically, residues 372–388 (VMSILQPILELNNMVNL) are periplasmic.

Belongs to the GSP F family. In terms of assembly, type II secretion system is composed of four main components: the outer membrane complex, the inner membrane complex, the cytoplasmic secretion ATPase and the periplasm-spanning pseudopilus. Homodimer. Interacts with ExeE and ExeL components.

It localises to the cell inner membrane. Functionally, component of the type II secretion system inner membrane complex required for the energy-dependent secretion of extracellular factors such as proteases and toxins from the periplasm. The sequence is that of Type II secretion system protein F (exeF) from Aeromonas hydrophila.